The primary structure comprises 289 residues: Transcriptional regulator Rob (289 aa).

Residues 8 to 106 (RDLLIWLEGH…SQTPALYRRS (99 aa)) form the HTH araC/xylS-type domain. DNA-binding regions (H-T-H motif) lie at residues 25–46 (DNVA…KDVT) and 73–96 (ILDI…KKQF).

Its function is as follows. Transcriptional regulator. Represses transcription of genes belonging to the flagellar regulon, including flhD, flhB and fliC; probably thereby leading to repression of motility. Binds to regulatory regions of target genes, including the promoters of the flhDC operon and of P-type ATPase mgtA. Involved in post-transcriptional regulation of expression. Represses expression of the flhDC operon in a post-transcriptional manner. Binds to the right arm of the replication origin oriC of the chromosome. Rob binding may influence the formation of the nucleoprotein structure, required for oriC function in the initiation of replication. This chain is Transcriptional regulator Rob, found in Salmonella typhimurium (strain LT2 / SGSC1412 / ATCC 700720).